The primary structure comprises 314 residues: NADH-ubiquinone oxidoreductase chain 2 (314 aa).

A run of 9 helical transmembrane segments spans residues 13–35 (LGVMLIGTILSVSSEELVGVWLG), 61–80 (YFVVQSTGSILMLVGFVSLM), 85–107 (VSGLVMSTAXTVLKSGVFPLHSW), 117–139 (WLASGLMLTWQKVAPLVFLSMIL), 144–166 (LWVVIVSMAGIGAVGGLNQNSVR), 189–209 (VVFVGYFAVYSLSVGLFFYGC), 224–244 (AASGMGLLMLMGMPPFLGFLA), 246–266 (VLVFLMSGSPVIVACIMGSVI), and 294–314 (IWSLVICMNIMGGALILVSFI).

This sequence belongs to the complex I subunit 2 family.

It localises to the mitochondrion inner membrane. The catalysed reaction is a ubiquinone + NADH + 5 H(+)(in) = a ubiquinol + NAD(+) + 4 H(+)(out). Functionally, core subunit of the mitochondrial membrane respiratory chain NADH dehydrogenase (Complex I) that is believed to belong to the minimal assembly required for catalysis. Complex I functions in the transfer of electrons from NADH to the respiratory chain. The immediate electron acceptor for the enzyme is believed to be ubiquinone. This chain is NADH-ubiquinone oxidoreductase chain 2 (ND2), found in Mytilus edulis (Blue mussel).